A 342-amino-acid polypeptide reads, in one-letter code: Ribosomal RNA small subunit methyltransferase H (342 aa).

Residues 43–45, D61, F87, D108, and Q115 contribute to the S-adenosyl-L-methionine site; that span reads GGY. Residues 322–342 form a disordered region; sequence ALDEASDGMNLPPLAELEKSR.

The protein belongs to the methyltransferase superfamily. RsmH family.

The protein localises to the cytoplasm. It carries out the reaction cytidine(1402) in 16S rRNA + S-adenosyl-L-methionine = N(4)-methylcytidine(1402) in 16S rRNA + S-adenosyl-L-homocysteine + H(+). Specifically methylates the N4 position of cytidine in position 1402 (C1402) of 16S rRNA. This chain is Ribosomal RNA small subunit methyltransferase H, found in Hyphomonas neptunium (strain ATCC 15444).